A 555-amino-acid polypeptide reads, in one-letter code: CTP synthase (555 aa).

Positions Met1 to Val277 are amidoligase domain. Ser26 is a CTP binding site. Ser26 serves as a coordination point for UTP. Residue Gly27–Ile32 coordinates ATP. Tyr67 is a binding site for L-glutamine. Residue Asp84 coordinates ATP. Asp84 and Glu152 together coordinate Mg(2+). CTP is bound by residues Asp159–Glu161, Lys198–Gln203, and Lys234. Residues Lys198–Gln203 and Lys234 contribute to the UTP site. Residues Leu307 to Ala542 enclose the Glutamine amidotransferase type-1 domain. Gly364 serves as a coordination point for L-glutamine. The active-site Nucleophile; for glutamine hydrolysis is the Cys391. L-glutamine is bound by residues Leu392 to Gln395, Glu415, and Arg472. Active-site residues include His515 and Glu517.

It belongs to the CTP synthase family. As to quaternary structure, homotetramer.

It carries out the reaction UTP + L-glutamine + ATP + H2O = CTP + L-glutamate + ADP + phosphate + 2 H(+). The enzyme catalyses L-glutamine + H2O = L-glutamate + NH4(+). The catalysed reaction is UTP + NH4(+) + ATP = CTP + ADP + phosphate + 2 H(+). Its pathway is pyrimidine metabolism; CTP biosynthesis via de novo pathway; CTP from UDP: step 2/2. Allosterically activated by GTP, when glutamine is the substrate; GTP has no effect on the reaction when ammonia is the substrate. The allosteric effector GTP functions by stabilizing the protein conformation that binds the tetrahedral intermediate(s) formed during glutamine hydrolysis. Inhibited by the product CTP, via allosteric rather than competitive inhibition. Functionally, catalyzes the ATP-dependent amination of UTP to CTP with either L-glutamine or ammonia as the source of nitrogen. Regulates intracellular CTP levels through interactions with the four ribonucleotide triphosphates. In Haloquadratum walsbyi (strain DSM 16790 / HBSQ001), this protein is CTP synthase.